The following is a 324-amino-acid chain: Acetyl-coenzyme A carboxylase carboxyl transferase subunit alpha (324 aa).

In terms of domain architecture, CoA carboxyltransferase C-terminal spans lysine 37–arginine 291.

The protein belongs to the AccA family. Acetyl-CoA carboxylase is a heterohexamer composed of biotin carboxyl carrier protein (AccB), biotin carboxylase (AccC) and two subunits each of ACCase subunit alpha (AccA) and ACCase subunit beta (AccD).

The protein localises to the cytoplasm. The enzyme catalyses N(6)-carboxybiotinyl-L-lysyl-[protein] + acetyl-CoA = N(6)-biotinyl-L-lysyl-[protein] + malonyl-CoA. Its pathway is lipid metabolism; malonyl-CoA biosynthesis; malonyl-CoA from acetyl-CoA: step 1/1. Component of the acetyl coenzyme A carboxylase (ACC) complex. First, biotin carboxylase catalyzes the carboxylation of biotin on its carrier protein (BCCP) and then the CO(2) group is transferred by the carboxyltransferase to acetyl-CoA to form malonyl-CoA. The sequence is that of Acetyl-coenzyme A carboxylase carboxyl transferase subunit alpha from Chlamydia pneumoniae (Chlamydophila pneumoniae).